Here is a 512-residue protein sequence, read N- to C-terminus: Protein maelstrom homolog (512 aa).

Residues 9 to 75 (AKGPFYFFMM…NPKEAGGYGE (67 aa)) constitute a DNA-binding region (HMG box). Disordered stretches follow at residues 49–72 (APHE…EAGG), 360–421 (RMSK…GTRA), and 439–465 (QSAN…DPQS). The segment covering 360–370 (RMSKLTTTSDN) has biased composition (polar residues). Residues 379–388 (RSTDRTDRDV) show a composition bias toward basic and acidic residues. 2 stretches are compositionally biased toward polar residues: residues 393–421 (IYSS…GTRA) and 439–449 (QSANRSPTKKN). Positions 451–464 (WSRENKLTEVRDPQ) are enriched in basic and acidic residues.

Belongs to the maelstrom family.

The protein resides in the cytoplasm. It is found in the nucleus. Functionally, plays a central role during gametogenesis by repressing transposable elements and preventing their mobilization, which is essential for the germline integrity. Probably acts via the piRNA metabolic process, which mediates the repression of transposable elements during meiosis by forming complexes composed of piRNAs and Piwi proteins and governs the repression of transposons. The chain is Protein maelstrom homolog (mael) from Culex quinquefasciatus (Southern house mosquito).